A 798-amino-acid chain; its full sequence is Protocadherin beta-14 (798 aa).

The N-terminal stretch at 1 to 26 (MEIRGALDLRKRQVLIFLVLLGLSRA) is a signal peptide. Residues 27-686 (GTESAHYSVA…APAQAQADSL (660 aa)) are Extracellular-facing. Cadherin domains lie at 35 to 133 (VAEE…SPTF), 138 to 242 (ILIK…APEF), 247 to 347 (YEVQ…PPEV), 352 to 451 (ITKR…APTF), and 456 to 561 (YTLF…SPFV). Residues Cys96 and Cys102 are joined by a disulfide bond. N-linked (GlcNAc...) asparagine glycosylation is present at Asn169. N-linked (GlcNAc...) asparagine glycosylation is found at Asn359, Asn418, Asn436, Asn487, and Asn567. The 104-residue stretch at 568-671 (GSAPCTELVP…LVDGFSQPYL (104 aa)) folds into the Cadherin 6 domain. Residues 687–711 (TVYLVVALASVSSLFLFSVLLFVAV) traverse the membrane as a helical segment. At 712–798 (RLCRRSRAAS…FRNSFGLNIQ (87 aa)) the chain is on the cytoplasmic side.

It localises to the cell membrane. In terms of biological role, potential calcium-dependent cell-adhesion protein. May be involved in the establishment and maintenance of specific neuronal connections in the brain. The sequence is that of Protocadherin beta-14 (PCDHB14) from Homo sapiens (Human).